The primary structure comprises 184 residues: Protein GrpE (184 aa).

Residues 1–26 (MANEQNEQAQDIQNEQVEQSNEQTQA) show a composition bias toward polar residues. The interval 1–34 (MANEQNEQAQDIQNEQVEQSNEQTQAEGVEQAND) is disordered.

It belongs to the GrpE family. As to quaternary structure, homodimer.

It is found in the cytoplasm. Participates actively in the response to hyperosmotic and heat shock by preventing the aggregation of stress-denatured proteins, in association with DnaK and GrpE. It is the nucleotide exchange factor for DnaK and may function as a thermosensor. Unfolded proteins bind initially to DnaJ; upon interaction with the DnaJ-bound protein, DnaK hydrolyzes its bound ATP, resulting in the formation of a stable complex. GrpE releases ADP from DnaK; ATP binding to DnaK triggers the release of the substrate protein, thus completing the reaction cycle. Several rounds of ATP-dependent interactions between DnaJ, DnaK and GrpE are required for fully efficient folding. The sequence is that of Protein GrpE from Acinetobacter baumannii (strain AB307-0294).